A 204-amino-acid polypeptide reads, in one-letter code: Spermatogenesis-associated protein 46 (204 aa).

The segment at 101–120 (SSSSQENTYPREANRKSKHG) is disordered.

As to expression, testis-specific.

It localises to the nucleus membrane. Its function is as follows. Plays a role in spermiogenesis and fertilization. In Mus musculus (Mouse), this protein is Spermatogenesis-associated protein 46 (Spata46).